We begin with the raw amino-acid sequence, 340 residues long: Anthranilate phosphoribosyltransferase (340 aa).

5-phospho-alpha-D-ribose 1-diphosphate contacts are provided by residues Gly-80, 83-84, Thr-88, 90-93, 108-116, and Ser-120; these read GD, NIST, and KHGNRAMSS. Gly-80 contacts anthranilate. Ser-92 lines the Mg(2+) pocket. Asn-111 lines the anthranilate pocket. Arg-166 is an anthranilate binding site. 2 residues coordinate Mg(2+): Asp-225 and Glu-226.

This sequence belongs to the anthranilate phosphoribosyltransferase family. Homodimer. The cofactor is Mg(2+).

It catalyses the reaction N-(5-phospho-beta-D-ribosyl)anthranilate + diphosphate = 5-phospho-alpha-D-ribose 1-diphosphate + anthranilate. Its pathway is amino-acid biosynthesis; L-tryptophan biosynthesis; L-tryptophan from chorismate: step 2/5. Its function is as follows. Catalyzes the transfer of the phosphoribosyl group of 5-phosphorylribose-1-pyrophosphate (PRPP) to anthranilate to yield N-(5'-phosphoribosyl)-anthranilate (PRA). The polypeptide is Anthranilate phosphoribosyltransferase (Chloroflexus aggregans (strain MD-66 / DSM 9485)).